The following is a 122-amino-acid chain: Large ribosomal subunit protein uL14 (122 aa).

Belongs to the universal ribosomal protein uL14 family. As to quaternary structure, part of the 50S ribosomal subunit. Forms a cluster with proteins L3 and L19. In the 70S ribosome, L14 and L19 interact and together make contacts with the 16S rRNA in bridges B5 and B8.

Binds to 23S rRNA. Forms part of two intersubunit bridges in the 70S ribosome. The chain is Large ribosomal subunit protein uL14 from Micrococcus luteus (Micrococcus lysodeikticus).